The chain runs to 383 residues: Probable cell wall hydrolase LytN (383 aa).

Positions 1 to 49 (MFVYYCKECFIMNKQQSKVRYSIRKVSIGILSISIGMFLALGMSNKAYA) are cleaved as a signal peptide. The region spanning 175 to 219 (QIYTVKKGDTLSAIALKYKTTVSNIQNTNNIANPNLIFIGQKLKV) is the LysM domain. Residues 241 to 378 (NSSTLNYLKT…NYENDMIFIR (138 aa)) enclose the Peptidase C51 domain.

Its subcellular location is the secreted. Probably involved in peptidoglycan hydrolysis. The polypeptide is Probable cell wall hydrolase LytN (lytN) (Staphylococcus aureus (strain MSSA476)).